The sequence spans 276 residues: O-methyltransferase cnsE (276 aa).

Residues Q110, 133-134 (DA), and H155 contribute to the S-adenosyl-L-methionine site.

It belongs to the methyltransferase superfamily. The cofactor is S-adenosyl-L-methionine.

Its pathway is alkaloid biosynthesis. Its function is as follows. O-methyltransferase; part of the gene cluster that mediates the biosynthesis of communesins, a prominent class of indole alkaloids with great potential as pharmaceuticals. Communesins are biosynthesized by the coupling of tryptamine and aurantioclavine, two building blocks derived from L-tryptophan. The L-tryptophan decarboxylase cnsB converts L-tryptophan to tryptamine, whereas the tryptophan dimethylallyltransferase cnsF converts L-tryptophan to 4-dimethylallyl tryptophan which is further transformed to aurantioclavine by the aurantioclavine synthase cnsA, probably aided by the catalase cnsD. The cytochrome P450 monooxygenase cnsC catalyzes the heterodimeric coupling between the two different indole moieties, tryptamine and aurantioclavine, to construct vicinal quaternary stereocenters and yield the heptacyclic communesin scaffold. The O-methyltransferase cnsE then methylates the communesin scaffold to produce communesin K, the simplest characterized communesin that contains the heptacyclic core. The dioxygenase cnsJ converts communesin K into communesin I. Acylation to introduce the hexadienyl group at position N16 of communesin I by the acyltransferase cnsK leads to the production of communesin B. The hexadienyl group is produced by the highly reducing polyketide synthase cnsI, before being hydrolytically removed from cnsI by the serine hydrolase cnsH, converted into hexadienyl-CoA by the CoA ligase cnsG, and then transferred to communesin I by cnsK. Surprisingly, cnsK may also be a promiscuous acyltransferase that can tolerate a range of acyl groups, including acetyl-, propionyl-, and butyryl-CoA, which lead to communesins A, G and H respectively. The roles of the alpha-ketoglutarate-dependent dioxygenases cnsM and cnsP have still to be determined. This Penicillium expansum (Blue mold rot fungus) protein is O-methyltransferase cnsE.